A 505-amino-acid polypeptide reads, in one-letter code: Glycerol kinase 2 (505 aa).

An ADP-binding site is contributed by threonine 17. Positions 17, 18, and 19 each coordinate ATP. A sn-glycerol 3-phosphate-binding site is contributed by threonine 17. Arginine 21 serves as a coordination point for ADP. The sn-glycerol 3-phosphate site is built by arginine 87, glutamate 88, tyrosine 139, and aspartate 249. Arginine 87, glutamate 88, tyrosine 139, aspartate 249, and glutamine 250 together coordinate glycerol. 2 residues coordinate ADP: threonine 271 and glycine 314. 4 residues coordinate ATP: threonine 271, glycine 314, glutamine 318, and glycine 415. ADP contacts are provided by glycine 415 and asparagine 419.

It belongs to the FGGY kinase family.

The catalysed reaction is glycerol + ATP = sn-glycerol 3-phosphate + ADP + H(+). It functions in the pathway polyol metabolism; glycerol degradation via glycerol kinase pathway; sn-glycerol 3-phosphate from glycerol: step 1/1. With respect to regulation, inhibited by fructose 1,6-bisphosphate (FBP). Key enzyme in the regulation of glycerol uptake and metabolism. Catalyzes the phosphorylation of glycerol to yield sn-glycerol 3-phosphate. The polypeptide is Glycerol kinase 2 (Pseudomonas aeruginosa (strain ATCC 15692 / DSM 22644 / CIP 104116 / JCM 14847 / LMG 12228 / 1C / PRS 101 / PAO1)).